Consider the following 331-residue polypeptide: Glyceraldehyde-3-phosphate dehydrogenase (331 aa).

Residues arginine 11–isoleucine 12, aspartate 33, and arginine 78 each bind NAD(+). D-glyceraldehyde 3-phosphate contacts are provided by residues serine 148–threonine 150, threonine 179, threonine 208–glycine 209, and arginine 231. Residue cysteine 149 is the Nucleophile of the active site. Residue asparagine 313 participates in NAD(+) binding.

Belongs to the glyceraldehyde-3-phosphate dehydrogenase family. Homotetramer.

It is found in the cytoplasm. It carries out the reaction D-glyceraldehyde 3-phosphate + phosphate + NAD(+) = (2R)-3-phospho-glyceroyl phosphate + NADH + H(+). It functions in the pathway carbohydrate degradation; glycolysis; pyruvate from D-glyceraldehyde 3-phosphate: step 1/5. The chain is Glyceraldehyde-3-phosphate dehydrogenase (GPD) from Eremothecium gossypii (strain ATCC 10895 / CBS 109.51 / FGSC 9923 / NRRL Y-1056) (Yeast).